The primary structure comprises 344 residues: UDP-3-O-acylglucosamine N-acyltransferase (344 aa).

His-248 acts as the Proton acceptor in catalysis.

It belongs to the transferase hexapeptide repeat family. LpxD subfamily. In terms of assembly, homotrimer.

It carries out the reaction a UDP-3-O-[(3R)-3-hydroxyacyl]-alpha-D-glucosamine + a (3R)-hydroxyacyl-[ACP] = a UDP-2-N,3-O-bis[(3R)-3-hydroxyacyl]-alpha-D-glucosamine + holo-[ACP] + H(+). It functions in the pathway bacterial outer membrane biogenesis; LPS lipid A biosynthesis. In terms of biological role, catalyzes the N-acylation of UDP-3-O-acylglucosamine using 3-hydroxyacyl-ACP as the acyl donor. Is involved in the biosynthesis of lipid A, a phosphorylated glycolipid that anchors the lipopolysaccharide to the outer membrane of the cell. The sequence is that of UDP-3-O-acylglucosamine N-acyltransferase from Prochlorococcus marinus (strain MIT 9515).